A 334-amino-acid chain; its full sequence is Putative lysine N-acyltransferase C17G9.06c (334 aa).

A substrate-binding site is contributed by histidine 248. The Proton acceptor role is filled by glutamate 286.

This sequence belongs to the lysine N-acyltransferase mbtK family.

It is found in the cytoplasm. The protein localises to the nucleus. This chain is Putative lysine N-acyltransferase C17G9.06c, found in Schizosaccharomyces pombe (strain 972 / ATCC 24843) (Fission yeast).